The primary structure comprises 432 residues: MRVVILGSGVVGVASAWYLNQAGHEVTVIDREPGAALETSAANAGQISPGYAAPWAAPGVPLKAIKWMFQRHAPLVVRLDGTQFQLKWMWQMLRNCDTSHYMENKGRMVRLAEYSRDCLKALRAETNIQYEGRQGGTLQLFRTEQQYENATRDIAVLEDAGVPYQLLESSRLAEVEPALAEVAHKLTGGLQLPNDETGDCQLFTQNLARMAEQAGVKFRFNTPVDQLLCDGEQIYGVKCGDEVIKADAYVMAFGSYSTAMLKGIVDIPVYPLKGYSLTIPIAQEDGAPVSTILDETYKIAITRFDNRMRVGGMAEIVGFNTELLQPRRETLEMVVRDLYPRGGHVEQATFWTGLRPMTPDGTPVVGRTRFKNLWLNTGHGTLGWTMACGSGQLLSDLLSGRTPAIPYEDLSVARYSRGFTPSRPGHLHGAHS.

FAD is bound at residue 3 to 17 (VVILGSGVVGVASAW).

The protein belongs to the DadA oxidoreductase family. FAD serves as cofactor.

The catalysed reaction is a D-alpha-amino acid + A + H2O = a 2-oxocarboxylate + AH2 + NH4(+). Its pathway is amino-acid degradation; D-alanine degradation; NH(3) and pyruvate from D-alanine: step 1/1. Its function is as follows. Oxidative deamination of D-amino acids. The protein is D-amino acid dehydrogenase of Shigella dysenteriae serotype 1 (strain Sd197).